The chain runs to 91 residues: Large ribosomal subunit protein bL27 (91 aa).

A disordered region spans residues 1 to 24 (MAHKKGVGSSRNGRDSNPKMRGVK).

Belongs to the bacterial ribosomal protein bL27 family.

This is Large ribosomal subunit protein bL27 from Chloroflexus aggregans (strain MD-66 / DSM 9485).